Reading from the N-terminus, the 500-residue chain is NF-kappa-B inhibitor epsilon (500 aa).

Positions methionine 1–proline 10 are enriched in basic and acidic residues. 3 disordered regions span residues methionine 1–alanine 66, leucine 84–serine 215, and serine 222–valine 241. Phosphoserine occurs at positions 157, 161, and 183. The span at serine 161–proline 186 shows a compositional bias: low complexity. Positions glutamate 196–aspartate 209 are enriched in basic and acidic residues. ANK repeat units lie at residues aspartate 258 to asparagine 291, leucine 293 to leucine 322, histidine 326 to arginine 355, glutamine 369 to valine 398, serine 403 to alanine 432, and asparagine 436 to leucine 465.

The protein belongs to the NF-kappa-B inhibitor family. In terms of assembly, interacts with RELA, REL, NFKB1 nuclear factor NF-kappa-B p50 subunit and NFKB2 nuclear factor NF-kappa-B p52 subunit. Interacts with HNRNPA2B1; the interaction may be mediated by the RRM2 domain of HNRNPA2B1, and HNRNPA2B1 may interact simultaneously with FAM76B and either NFKBIA or NFKBIE to form a complex. Serine phosphorylated; followed by proteasome-dependent degradation. In terms of tissue distribution, highly expressed in spleen, testis and lung, followed by kidney, pancreas, heart, placenta and brain. Also expressed in granulocytes and macrophages.

The protein resides in the cytoplasm. Functionally, sequesters NF-kappa-B transcription factor complexes in the cytoplasm, thereby inhibiting their activity. Sequestered complexes include NFKB1-RELA (p50-p65) and NFKB1-REL (p50-c-Rel) complexes. Limits B-cell activation in response to pathogens, and also plays an important role in B-cell development. The chain is NF-kappa-B inhibitor epsilon (NFKBIE) from Homo sapiens (Human).